The sequence spans 378 residues: Acyl-coenzyme A diphosphatase NUDT19 (378 aa).

The Nudix hydrolase domain occupies 7–258 (HWREAASVLL…EIWLAPPQFY (252 aa)). Residues 105–126 (SPLPGEVAFRICAIRETFEEAG) carry the Nudix box motif. Positions 120 and 124 each coordinate Mg(2+). The Microbody targeting signal signature appears at 376–378 (SRL).

This sequence belongs to the Nudix hydrolase family. As to quaternary structure, monomer. It depends on Mg(2+) as a cofactor. The cofactor is Mn(2+).

It is found in the peroxisome. It catalyses the reaction an acyl-CoA + H2O = an acyl-4'-phosphopantetheine + adenosine 3',5'-bisphosphate + 2 H(+). The enzyme catalyses CoA + H2O = (R)-4'-phosphopantetheine + adenosine 3',5'-bisphosphate + 2 H(+). It carries out the reaction hexanoyl-CoA + H2O = hexanoyl-4'-phosphopantetheine + adenosine 3',5'-bisphosphate + 2 H(+). The catalysed reaction is octanoyl-CoA + H2O = S-octanoyl-4'-phosphopantetheine + adenosine 3',5'-bisphosphate + 2 H(+). It catalyses the reaction butanoyl-CoA + H2O = S-butanoyl-4'-phosphopantetheine + adenosine 3',5'-bisphosphate + 2 H(+). The enzyme catalyses propanoyl-CoA + H2O = propanoyl-4'-phosphopantetheine + adenosine 3',5'-bisphosphate + 2 H(+). It carries out the reaction malonyl-CoA + H2O = malonyl-4'-phosphopantetheine + adenosine 3',5'-bisphosphate + 2 H(+). The catalysed reaction is succinyl-CoA + H2O = succinyl-4'-phosphopantetheine + adenosine 3',5'-bisphosphate + 2 H(+). It catalyses the reaction choloyl-CoA + H2O = S-choloyl-4'-phosphopantetheine + adenosine 3',5'-bisphosphate + 2 H(+). The enzyme catalyses 4,8-dimethylnonanoyl-CoA + H2O = S-(4,8-dimethylnonanoyl)-4'-phosphopantetheine + adenosine 3',5'-bisphosphate + 2 H(+). It carries out the reaction (9Z,12Z,15Z)-octadecatrienoyl-CoA + H2O = S-(9Z,12Z,15Z-octadecatrienoyl)-4'-phosphopantetheine + adenosine 3',5'-bisphosphate + 2 H(+). The catalysed reaction is (9Z,12Z)-octadecadienoyl-CoA + H2O = S-(9Z,12Z-octadecadienoyl)-4'-phosphopantetheine + adenosine 3',5'-bisphosphate + 2 H(+). It catalyses the reaction (9Z)-hexadecenoyl-CoA + H2O = S-(9Z-hexadecenoyl)-4'-phosphopantetheine + adenosine 3',5'-bisphosphate + 2 H(+). The enzyme catalyses (9Z)-tetradecenoyl-CoA + H2O = S-(9Z-tetradecenoyl)-4'-phosphopantetheine + adenosine 3',5'-bisphosphate + 2 H(+). It carries out the reaction (6Z)-octenoyl-CoA + H2O = S-(6Z-octenoyl)-4'-phosphopantetheine + adenosine 3',5'-bisphosphate + 2 H(+). The catalysed reaction is hexadecanoyl-CoA + H2O = S-hexadecanoyl-4'-phosphopantetheine + adenosine 3',5'-bisphosphate + 2 H(+). It catalyses the reaction tetradecanoyl-CoA + H2O = tetradecanoyl-4'-phosphopantetheine + adenosine 3',5'-bisphosphate + 2 H(+). The enzyme catalyses dodecanoyl-CoA + H2O = S-dodecanoyl-4'-phosphopantetheine + adenosine 3',5'-bisphosphate + 2 H(+). It carries out the reaction a 5'-end CoA-ribonucleoside in mRNA + H2O = a 5'-end phospho-adenosine-phospho-ribonucleoside in mRNA + (R)-4'-phosphopantetheine + 2 H(+). Fatty acyl-coenzyme A (CoA) diphosphatase that hydrolyzes fatty acyl-CoA to yield acyl-4'-phosphopantetheine and adenosine 3',5'-bisphosphate. Mediates the hydrolysis of a wide range of CoA esters, including choloyl-CoA and branched-chain fatty-acyl-CoA esters and at low substrate concentrations medium and long-chain fatty-acyl-CoA esters are the primary substrates. Highest activity seen with medium-chain acyl-CoA esters and higher rates of activity seen with the unsaturated acyl-CoA esters compared with the saturated esters. Exhibits decapping activity towards dpCoA-capped RNAs in vitro. The protein is Acyl-coenzyme A diphosphatase NUDT19 (NUDT19) of Gallus gallus (Chicken).